The sequence spans 71 residues: uncharacterized protein (71 aa).

The protein resides in the mitochondrion matrix. It is found in the kinetoplast. This is an uncharacterized protein from Trypanosoma brucei brucei.